A 129-amino-acid polypeptide reads, in one-letter code: Gem-associated protein 7 (129 aa).

Methionine 1 bears the N-acetylmethionine mark. Residues 1–31 (MQSPLTIPVPVPVLRLPRGPDGFSRGFASDG) enclose the SUZ-C domain. One can recognise a Sm domain in the interval 63-129 (RYLRSLLAMV…SDIISYSFKL (67 aa)).

The protein belongs to the gemin-7 family. Part of the core SMN complex that contains SMN1, GEMIN2/SIP1, DDX20/GEMIN3, GEMIN4, GEMIN5, GEMIN6, GEMIN7, GEMIN8 and STRAP/UNRIP. Part of the SMN-Sm complex that contains SMN1, GEMIN2/SIP1, DDX20/GEMIN3, GEMIN4, GEMIN5, GEMIN6, GEMIN7, GEMIN8, STRAP/UNRIP and the Sm proteins SNRPB, SNRPD1, SNRPD2, SNRPD3, SNRPE, SNRPF and SNRPG. Interacts with GEMIN6; the interaction is direct. Interacts with STRAP/UNRIP; the interaction is direct. Interacts with GEMIN8; the interaction is direct. Interacts with SNRPB, SNRPD2, SNRPD3 and SNRPE; the interaction is direct.

Its subcellular location is the nucleus. It is found in the nucleoplasm. The protein resides in the gem. The protein localises to the cytoplasm. The SMN complex catalyzes the assembly of small nuclear ribonucleoproteins (snRNPs), the building blocks of the spliceosome, and thereby plays an important role in the splicing of cellular pre-mRNAs. Most spliceosomal snRNPs contain a common set of Sm proteins SNRPB, SNRPD1, SNRPD2, SNRPD3, SNRPE, SNRPF and SNRPG that assemble in a heptameric protein ring on the Sm site of the small nuclear RNA to form the core snRNP (Sm core). In the cytosol, the Sm proteins SNRPD1, SNRPD2, SNRPE, SNRPF and SNRPG are trapped in an inactive 6S pICln-Sm complex by the chaperone CLNS1A that controls the assembly of the core snRNP. To assemble core snRNPs, the SMN complex accepts the trapped 5Sm proteins from CLNS1A forming an intermediate. Binding of snRNA inside 5Sm triggers eviction of the SMN complex, thereby allowing binding of SNRPD3 and SNRPB to complete assembly of the core snRNP. This Mus musculus (Mouse) protein is Gem-associated protein 7 (Gemin7).